The following is a 797-amino-acid chain: Xaa-Pro dipeptidyl-peptidase (797 aa).

Catalysis depends on charge relay system residues Ser370, Asp490, and His521.

Belongs to the peptidase S15 family. As to quaternary structure, homodimer.

Its subcellular location is the cytoplasm. It catalyses the reaction Hydrolyzes Xaa-Pro-|- bonds to release unblocked, N-terminal dipeptides from substrates including Ala-Pro-|-p-nitroanilide and (sequentially) Tyr-Pro-|-Phe-Pro-|-Gly-Pro-|-Ile.. Removes N-terminal dipeptides sequentially from polypeptides having unsubstituted N-termini provided that the penultimate residue is proline. In Lacticaseibacillus rhamnosus (Lactobacillus rhamnosus), this protein is Xaa-Pro dipeptidyl-peptidase.